The following is a 1245-amino-acid chain: ATP-dependent helicase/nuclease subunit A (1245 aa).

Residues 4-477 form the UvrD-like helicase ATP-binding domain; sequence TKWTDEQLSA…IQLYKNFRSR (474 aa). ATP is bound at residue 25–32; it reads AAAGSGKT. The UvrD-like helicase C-terminal domain occupies 517-815; that stretch reads KFKDTIVGGP…RIMSIHKSKG (299 aa).

Belongs to the helicase family. AddA subfamily. As to quaternary structure, heterodimer of AddA and AddB/RexB. Requires Mg(2+) as cofactor.

The enzyme catalyses Couples ATP hydrolysis with the unwinding of duplex DNA by translocating in the 3'-5' direction.. It carries out the reaction ATP + H2O = ADP + phosphate + H(+). The heterodimer acts as both an ATP-dependent DNA helicase and an ATP-dependent, dual-direction single-stranded exonuclease. Recognizes the chi site generating a DNA molecule suitable for the initiation of homologous recombination. The AddA nuclease domain is required for chi fragment generation; this subunit has the helicase and 3' -&gt; 5' nuclease activities. The polypeptide is ATP-dependent helicase/nuclease subunit A (Clostridium beijerinckii (strain ATCC 51743 / NCIMB 8052) (Clostridium acetobutylicum)).